The sequence spans 396 residues: MSVRLVLAKGREKSLLRRHPWIFSGAVARMEGKASLGETIDIVDHQGKWLARGAYSPASQIRARVWTFDPSESIDIAFFTRRLQQAQKWRDWLAQKDGLNSYRLIAGESDGLPGITIDRFGNFLVLQLLSAGAEYQRAALISALQTLYPECAIYDRSDVAVRKKEGMELTQGPVTGELPPALLPIEEHGMKLLVDIQHGHKTGYYLDQRDSRLATRRYVENKRVLNCFSYTGGFAVSALMGGCSQVVSVDTSQEALDIARQNVELNKLDLSKAEFVRDDVFKLLRTYRDRGEKFDVIVMDPPKFVENKSQLMGACRGYKDINMLAIQLLNEGGVLLTFSCSGLMTSDLFQKIIADAAIDAGRDVQFIEQFRQAADHPVIATYPEGLYLKGFACRVM.

The 80-residue stretch at 2–81 (SVRLVLAKGR…ESIDIAFFTR (80 aa)) folds into the PUA domain.

Belongs to the methyltransferase superfamily. RlmI family.

It localises to the cytoplasm. It carries out the reaction cytidine(1962) in 23S rRNA + S-adenosyl-L-methionine = 5-methylcytidine(1962) in 23S rRNA + S-adenosyl-L-homocysteine + H(+). In terms of biological role, specifically methylates the cytosine at position 1962 (m5C1962) of 23S rRNA. This Escherichia coli (strain SMS-3-5 / SECEC) protein is Ribosomal RNA large subunit methyltransferase I.